A 511-amino-acid polypeptide reads, in one-letter code: Phosphoenolpyruvate carboxylase (511 aa).

It belongs to the PEPCase type 2 family. Homotetramer. Mg(2+) is required as a cofactor.

The enzyme catalyses oxaloacetate + phosphate = phosphoenolpyruvate + hydrogencarbonate. Catalyzes the irreversible beta-carboxylation of phosphoenolpyruvate (PEP) to form oxaloacetate (OAA), a four-carbon dicarboxylic acid source for the tricarboxylic acid cycle. The chain is Phosphoenolpyruvate carboxylase from Saccharolobus islandicus (strain Y.N.15.51 / Yellowstone #2) (Sulfolobus islandicus).